The chain runs to 150 residues: Large ribosomal subunit protein bL9 (150 aa).

The protein belongs to the bacterial ribosomal protein bL9 family.

Its function is as follows. Binds to the 23S rRNA. This is Large ribosomal subunit protein bL9 from Renibacterium salmoninarum (strain ATCC 33209 / DSM 20767 / JCM 11484 / NBRC 15589 / NCIMB 2235).